The primary structure comprises 214 residues: Protein PsaE (214 aa).

The signal sequence occupies residues M1–S24. A DNA-binding region (ompR/PhoB-type) is located at residues M1–K94.

Its function is as follows. Required for expression of pH 6 antigen. The polypeptide is Protein PsaE (psaE) (Yersinia pseudotuberculosis serotype I (strain IP32953)).